The sequence spans 452 residues: Probable cysteine protease RD21C (452 aa).

The signal sequence occupies residues Met1–Ala29. A propeptide spans Thr30–Ser128 (activation peptide). An N-linked (GlcNAc...) asparagine glycan is attached at Asn82. 5 disulfides stabilise this stretch: Cys150–Cys192, Cys184–Cys226, Cys284–Cys335, Cys363–Cys375, and Cys369–Cys390. Residue Cys153 is part of the active site. Active-site residues include His290 and Asn310. The propeptide at Lys346–Ala452 is removed in mature form.

The protein belongs to the peptidase C1 family. Interacts with WSCP.

Functionally, probable thiol protease. This is Probable cysteine protease RD21C from Arabidopsis thaliana (Mouse-ear cress).